The sequence spans 582 residues: Isopropyl malate synthase AMT7 (582 aa).

The region spanning 61-341 (PVLFSTDLRD…EPGIDLSRLD (281 aa)) is the Pyruvate carboxyltransferase domain.

It belongs to the alpha-IPM synthase/homocitrate synthase family. LeuA type 2 subfamily.

The catalysed reaction is 3-methyl-2-oxobutanoate + acetyl-CoA + H2O = (2S)-2-isopropylmalate + CoA + H(+). It participates in mycotoxin biosynthesis. In terms of biological role, isopropyl malate synthase; part of the gene clusters that mediate the biosynthesis of AM-toxins, host-selective toxins (HSTs) causing Alternaria blotch on apple, a worldwide distributed disease. AM-toxins are cyclic depsipeptides containing the 3 residues 2-hydroxy-isovaleric acid (2-HIV), dehydroalanine, L-alanine which are common for all 3 AM-toxins I to III. The fourth precursor is L-alpha-amino-methoxyphenyl-valeric acid (L-Amv) for AM-toxin I, L-alpha-amino-phenyl-valeric acid (L-Apv) for AM-toxin II, and L-alpha-amino-hydroxyphenyl-valeric acid (L-Ahv) for AM-toxin III. AM-toxins have two target sites for affecting susceptible apple cells; they cause invagination of the plasma membrane and electrolyte loss and chloroplast disorganization. The non-ribosomal peptide synthetase AMT1 contains 4 catalytic modules and is responsible for activation of each residue in AM-toxin. The aldo-keto reductase AMT2 catalyzes the conversion of 2-keto-isovaleric acid (2-KIV) to 2-hydroxy-isovaleric acid (2-HIV), one of the precursor residues incorporated by AMT1 during AM-toxin biosynthesis, by reduction of its ketone to an alcohol. The cytochrome P450 monooxygenase AMT3 and the thioesterase AMT4 are also important for AM-toxin production, but their exact function within the AM-toxin biosynthesis are not known yet. Up to 21 proteins (including AMT1 to AMT4) are predicted to be involved in AM-toxin biosynthesis since their expression ishighly up-regulated in AM-toxin-producing cultures. This chain is Isopropyl malate synthase AMT7, found in Alternaria alternata (Alternaria rot fungus).